Consider the following 291-residue polypeptide: uncharacterized protein (291 aa).

10 helical membrane passes run 5 to 23 (ILLSLSASVLFGYLYYFST), 33 to 52 (IFGFRIIFTLPFVIAAVFLF), 69 to 91 (PLLIFGFLFNSAMMGIQIWLFLW), 101 to 120 (VSFGYLLLPLTMVLVGRLVF), 127 to 144 (VKFLAVVIAAIGVFSNIL), 148 to 165 (GLSWEALLVSFGYSTYFA), 172 to 194 (INDLAGFCLEMSLLLPVCIYFAW), 209 to 228 (LLLLVLLGLISGVALNTYIV), 235 to 257 (INVLGLLGYAEPIMMLFVSFLIG), and 262 to 284 (SETIPLFICLMISMILFMSEGLV).

This sequence belongs to the EamA transporter family.

The protein resides in the cell membrane. This is an uncharacterized protein from Pasteurella multocida (strain Pm70).